The primary structure comprises 139 residues: uncharacterized protein (139 aa).

The next 3 membrane-spanning stretches (helical) occupy residues tyrosine 38–phenylalanine 60, phenylalanine 72–serine 94, and isoleucine 114–alanine 136.

It localises to the cell membrane. This is an uncharacterized protein from Treponema pallidum (strain Nichols).